Here is a 296-residue protein sequence, read N- to C-terminus: Light-independent protochlorophyllide reductase iron-sulfur ATP-binding protein (296 aa).

ATP is bound by residues 39–44 (GIGKST) and Lys-68. Ser-43 lines the Mg(2+) pocket. [4Fe-4S] cluster is bound by residues Cys-124 and Cys-158. 209–210 (NR) lines the ATP pocket.

This sequence belongs to the NifH/BchL/ChlL family. In terms of assembly, homodimer. Protochlorophyllide reductase is composed of three subunits; ChlL, ChlN and ChlB. [4Fe-4S] cluster is required as a cofactor.

It catalyses the reaction chlorophyllide a + oxidized 2[4Fe-4S]-[ferredoxin] + 2 ADP + 2 phosphate = protochlorophyllide a + reduced 2[4Fe-4S]-[ferredoxin] + 2 ATP + 2 H2O. It participates in porphyrin-containing compound metabolism; chlorophyll biosynthesis (light-independent). In terms of biological role, component of the dark-operative protochlorophyllide reductase (DPOR) that uses Mg-ATP and reduced ferredoxin to reduce ring D of protochlorophyllide (Pchlide) to form chlorophyllide a (Chlide). This reaction is light-independent. The L component serves as a unique electron donor to the NB-component of the complex, and binds Mg-ATP. The chain is Light-independent protochlorophyllide reductase iron-sulfur ATP-binding protein from Prochlorococcus marinus (strain MIT 9313).